Reading from the N-terminus, the 229-residue chain is Orotate phosphoribosyltransferase (229 aa).

Residues R107, K108, K111, H113, and 133–141 each bind 5-phospho-alpha-D-ribose 1-diphosphate; that span reads EDLTTAGGS. T137 provides a ligand contact to orotate.

Belongs to the purine/pyrimidine phosphoribosyltransferase family. PyrE subfamily. As to quaternary structure, homodimer. Mg(2+) serves as cofactor.

It catalyses the reaction orotidine 5'-phosphate + diphosphate = orotate + 5-phospho-alpha-D-ribose 1-diphosphate. Its pathway is pyrimidine metabolism; UMP biosynthesis via de novo pathway; UMP from orotate: step 1/2. In terms of biological role, catalyzes the transfer of a ribosyl phosphate group from 5-phosphoribose 1-diphosphate to orotate, leading to the formation of orotidine monophosphate (OMP). This Rhizobium etli (strain ATCC 51251 / DSM 11541 / JCM 21823 / NBRC 15573 / CFN 42) protein is Orotate phosphoribosyltransferase.